The chain runs to 707 residues: Ornithine decarboxylase (707 aa).

Residues 83 to 102 (NRNPLSRADSAAGREETAQT) are disordered. The residue at position 288 (Lys-288) is an N6-(pyridoxal phosphate)lysine. Pyridoxal 5'-phosphate is bound by residues Ser-421, Gly-458, and 498-501 (EPGR). Position 561–562 (561–562 (FD)) interacts with substrate. Cys-634 functions as the Proton donor; shared with dimeric partner in the catalytic mechanism. Asp-635 provides a ligand contact to substrate. Tyr-663 is a pyridoxal 5'-phosphate binding site.

The protein belongs to the Orn/Lys/Arg decarboxylase class-II family. As to quaternary structure, homodimer. Only the dimer is catalytically active, as the active sites are constructed of residues from both monomers. Requires pyridoxal 5'-phosphate as cofactor.

It carries out the reaction L-ornithine + H(+) = putrescine + CO2. The protein operates within amine and polyamine biosynthesis; putrescine biosynthesis via L-ornithine pathway; putrescine from L-ornithine: step 1/1. With respect to regulation, inhibited by antizyme (AZ) in response to polyamine levels. AZ inhibits the assembly of the functional homodimer by binding to ODC monomers and targeting them for ubiquitin-independent proteolytic destruction by the 26S proteasome. Inhibited by 1-amino-oxy-3-aminopropane (APA, an isosteric analog of putrescine). Irreversibly inhibited by alpha-difluoromethylornithine (DFMO, a curative agent of West African sleeping sickness). Catalyzes the first and rate-limiting step of polyamine biosynthesis that converts ornithine into putrescine, which is the precursor for the polyamines, spermidine and spermine. Polyamines are essential for cell proliferation and are implicated in cellular processes, ranging from DNA replication to apoptosis. The sequence is that of Ornithine decarboxylase from Leishmania donovani.